Consider the following 320-residue polypeptide: HPr kinase/phosphorylase (320 aa).

Catalysis depends on residues His-141 and Lys-162. 156–163 (GHSGLGKS) serves as a coordination point for ATP. Position 163 (Ser-163) interacts with Mg(2+). The Proton acceptor; for phosphorylation activity. Proton donor; for dephosphorylation activity role is filled by Asp-180. The tract at residues 204-213 (LEVRGLGILN) is important for the catalytic mechanism of both phosphorylation and dephosphorylation. Glu-205 is a binding site for Mg(2+). The active site involves Arg-248. Residues 269–274 (PVAVGR) form an important for the catalytic mechanism of dephosphorylation region.

The protein belongs to the HPrK/P family. Homohexamer. Mg(2+) serves as cofactor.

It carries out the reaction [HPr protein]-L-serine + ATP = [HPr protein]-O-phospho-L-serine + ADP + H(+). The enzyme catalyses [HPr protein]-O-phospho-L-serine + phosphate + H(+) = [HPr protein]-L-serine + diphosphate. In terms of biological role, catalyzes the ATP- as well as the pyrophosphate-dependent phosphorylation of a specific serine residue in HPr, a phosphocarrier protein of the phosphoenolpyruvate-dependent sugar phosphotransferase system (PTS). HprK/P also catalyzes the pyrophosphate-producing, inorganic phosphate-dependent dephosphorylation (phosphorolysis) of seryl-phosphorylated HPr (P-Ser-HPr). The chain is HPr kinase/phosphorylase from Neisseria meningitidis serogroup B (strain ATCC BAA-335 / MC58).